Here is an 89-residue protein sequence, read N- to C-terminus: Venom peptide BmKAPI (89 aa).

Positions 1 to 22 (MKFVFASFALFVIFLCFSQSLS) are cleaved as a signal peptide. 5 disulfide bridges follow: Cys28–Cys66, Cys37–Cys62, Cys41–Cys55, Cys46–Cys86, and Cys68–Cys80. Positions 28–86 (CRDNEVFDNCISNCGPPRCSNILNTYPCTNLGPLCTPGCKCKDGRVYDNQGRCVLQTEC) constitute a TIL domain.

Belongs to the serine protease inhibitor-like (TIL domain-containing) family. As to expression, expressed by the venom gland.

The protein localises to the secreted. Its function is as follows. Serine protease inhibitor. The chain is Venom peptide BmKAPI from Olivierus martensii (Manchurian scorpion).